Here is a 460-residue protein sequence, read N- to C-terminus: Flavonol 3-O-glucosyltransferase (460 aa).

Catalysis depends on His23, which acts as the Proton acceptor. Residues His23 and Gln88 each contribute to the an anthocyanidin site. The active-site Charge relay is Asp123. Thr145 contacts UDP-alpha-D-glucose. His154 provides a ligand contact to an anthocyanidin. Positions 339, 341, 356, 359, 360, 361, and 364 each coordinate UDP-alpha-D-glucose. Gly379 is a binding site for an anthocyanidin. The UDP-alpha-D-glucose site is built by Asp380 and Gln381.

This sequence belongs to the UDP-glycosyltransferase family.

The enzyme catalyses a flavonol + UDP-alpha-D-glucose = a flavonol 3-O-beta-D-glucoside + UDP + H(+). It catalyses the reaction quercetin + UDP-alpha-D-glucose = quercetin 3-O-beta-D-glucoside + UDP + H(+). The protein operates within flavonoid metabolism. In terms of biological role, flavonol 3-O-glucosyltransferase that catalyzes the transfer of glucose from UDP-glucose to the 3-OH position of quercetin and kaempferol. Possesses high quercetin 3-O-glucosyltransferase activity in vitro. Catalyzes the glycosylation of anthocyanins from UDP-glucose. Also active in vitro on benzoates and benzoate derivatives. This chain is Flavonol 3-O-glucosyltransferase, found in Arabidopsis thaliana (Mouse-ear cress).